Here is a 386-residue protein sequence, read N- to C-terminus: Succinate--CoA ligase [ADP-forming] subunit beta (386 aa).

The ATP site is built by Lys-46, Glu-99, Ala-102, and Glu-107. Positions 199 and 213 each coordinate Mg(2+). Residues Asn-264 and 321 to 323 (GIM) each bind substrate.

The protein belongs to the succinate/malate CoA ligase beta subunit family. As to quaternary structure, heterotetramer of two alpha and two beta subunits. Mg(2+) serves as cofactor.

The catalysed reaction is succinate + ATP + CoA = succinyl-CoA + ADP + phosphate. The enzyme catalyses GTP + succinate + CoA = succinyl-CoA + GDP + phosphate. It participates in carbohydrate metabolism; tricarboxylic acid cycle; succinate from succinyl-CoA (ligase route): step 1/1. Functionally, succinyl-CoA synthetase functions in the citric acid cycle (TCA), coupling the hydrolysis of succinyl-CoA to the synthesis of either ATP or GTP and thus represents the only step of substrate-level phosphorylation in the TCA. The beta subunit provides nucleotide specificity of the enzyme and binds the substrate succinate, while the binding sites for coenzyme A and phosphate are found in the alpha subunit. This chain is Succinate--CoA ligase [ADP-forming] subunit beta, found in Orientia tsutsugamushi (strain Boryong) (Rickettsia tsutsugamushi).